Consider the following 269-residue polypeptide: Putative pyruvate, phosphate dikinase regulatory protein (269 aa).

147–154 (GVSRTSKT) lines the ADP pocket.

The protein belongs to the pyruvate, phosphate/water dikinase regulatory protein family. PDRP subfamily.

The enzyme catalyses N(tele)-phospho-L-histidyl/L-threonyl-[pyruvate, phosphate dikinase] + ADP = N(tele)-phospho-L-histidyl/O-phospho-L-threonyl-[pyruvate, phosphate dikinase] + AMP + H(+). It carries out the reaction N(tele)-phospho-L-histidyl/O-phospho-L-threonyl-[pyruvate, phosphate dikinase] + phosphate + H(+) = N(tele)-phospho-L-histidyl/L-threonyl-[pyruvate, phosphate dikinase] + diphosphate. Bifunctional serine/threonine kinase and phosphorylase involved in the regulation of the pyruvate, phosphate dikinase (PPDK) by catalyzing its phosphorylation/dephosphorylation. This chain is Putative pyruvate, phosphate dikinase regulatory protein, found in Geotalea uraniireducens (strain Rf4) (Geobacter uraniireducens).